Here is an 886-residue protein sequence, read N- to C-terminus: Major capsid protein (886 aa).

Met1 carries the N-acetylmethionine; by host modification. Positions 42–61 (NTHNDHEETHGESPEVPKAS) are disordered. Over residues 44–56 (HNDHEETHGESPE) the composition is skewed to basic and acidic residues.

Belongs to the totivirus major capsid protein family. Post-translationally, acetylation is necessary for viral assembly.

Its subcellular location is the virion. In terms of biological role, capsid protein self-assembles to form an icosahedral capsid with a T=2 symmetry, 35 nm in diameter, and consisting of 60 capsid proteins asymmetric dimers. The capsid encapsulates the genomic dsRNA and the polymerase and remains intact following cell entry to protect the dsRNA from degradation and to prevent unfavorable antiviral responses in the host cell during all the replication cycle of the virus. Nascent transcripts are transcribed within the structural confines of the virion and are extruded into the cytoplasm. Its function is as follows. Binds and removes 5' cap structures from cellular mRNA. This Giardia lamblia virus (isolate Wang) (GLV) protein is Major capsid protein (gag).